Reading from the N-terminus, the 242-residue chain is Ribose-5-phosphate isomerase A (242 aa).

Substrate contacts are provided by residues 39–42 (SGST), 95–98 (DGAD), and 108–111 (KGGG). Glutamate 117 serves as the catalytic Proton acceptor. Position 135 (lysine 135) interacts with substrate.

This sequence belongs to the ribose 5-phosphate isomerase family. In terms of assembly, homodimer.

The enzyme catalyses aldehydo-D-ribose 5-phosphate = D-ribulose 5-phosphate. It participates in carbohydrate degradation; pentose phosphate pathway; D-ribose 5-phosphate from D-ribulose 5-phosphate (non-oxidative stage): step 1/1. Its function is as follows. Catalyzes the reversible conversion of ribose-5-phosphate to ribulose 5-phosphate. The polypeptide is Ribose-5-phosphate isomerase A (Chlamydia trachomatis serovar A (strain ATCC VR-571B / DSM 19440 / HAR-13)).